The following is a 376-amino-acid chain: Decapping nuclease RAI1 (376 aa).

Glu-168 contacts a divalent metal cation. Positions 200 and 217 each coordinate substrate. A divalent metal cation-binding residues include Asp-219, Glu-237, and Leu-238. 2 residues coordinate substrate: Lys-239 and Gln-263.

It belongs to the DXO/Dom3Z family. As to quaternary structure, interacts with RAT1; the interaction is direct, stabilizes RAT1 protein structure and stimulates its exoribonuclease activity. The interaction also stimulates RAI1 pyrophosphohydrolase activity, probably by recruiting it to mRNA substrates. A divalent metal cation serves as cofactor.

It is found in the nucleus. The enzyme catalyses a 5'-end NAD(+)-phospho-ribonucleoside in mRNA + H2O = a 5'-end phospho-ribonucleoside in mRNA + NAD(+) + H(+). It carries out the reaction a 5'-end (N(7)-methyl 5'-triphosphoguanosine)-ribonucleoside-ribonucleotide in mRNA + H2O = a (N(7)-methyl 5'-triphosphoguanosine)-nucleoside + a 5'-end phospho-ribonucleoside in mRNA + H(+). The catalysed reaction is a 5'-end triphospho-ribonucleoside in mRNA + H2O = a 5'-end phospho-ribonucleoside in mRNA + diphosphate + H(+). Its function is as follows. Decapping enzyme for NAD-capped RNAs: specifically hydrolyzes the nicotinamide adenine dinucleotide (NAD) cap from a subset of RNAs by removing the entire NAD moiety from the 5'-end of an NAD-capped RNA. The NAD-cap is present at the 5'-end of some RNAs and snoRNAs. In contrast to the canonical 5'-end N7 methylguanosine (m7G) cap, the NAD cap promotes mRNA decay. Also acts as a non-canonical decapping enzyme that removes the entire cap structure of m7G capped or incompletely capped RNAs. Has decapping activity toward incomplete 5'-end m7G cap mRNAs such as unmethylated 5'-end-capped RNA (cap0), while it has no activity toward 2'-O-ribose methylated m7G cap (cap1). Also possesses RNA 5'-pyrophosphohydrolase activity by hydrolyzing the 5'-end triphosphate to release pyrophosphates. Stimulates exoribonuclease activity of Rat1, allowing it to degrade RNAs with stable secondary structure more effectively. This Gibberella zeae (strain ATCC MYA-4620 / CBS 123657 / FGSC 9075 / NRRL 31084 / PH-1) (Wheat head blight fungus) protein is Decapping nuclease RAI1 (RAI1).